A 464-amino-acid chain; its full sequence is MKFLLLILTLWVTSSGADPLKENDMLFAENYLENFYGLKVERIPMTKMKTNRNFIEEKVQEMQQFLGLNVTGQLDTSTLEMMHKPRCGVPDVYHFKTMPGRPVWRKHYITYRIKNYTPDMKREDVEYAIQKAFQVWSDVTPLKFRKITTGKADIMILFASGAHGDYGAFDGRGGVIAHAFGPGPGIGGDTHFDEDEIWSKSYKGTNLFLVAVHELGHALGLDHSNDPKAIMFPTYGYIDLNTFHLSADDIRGIQSLYGGPEQHQPMPKPDNPEPTACDHNLKFDAVTTVGNKIFFFKDSFFWWKIPKSSTTSVRLISSLWPTLPSGIEAAYEIGDRHQVFLFKGDKFWLISHLRLQPNYPKSIHSLGFPDFVKKIDAAVFNPSLRKTYFFVDNLYWRYDERREVMDAGYPKLITKHFPGIGPKIDAVFYFQRYYYFFQGPNQLEYDTFSSRVTKKLKSNSWFDC.

A signal peptide spans 1 to 17; sequence MKFLLLILTLWVTSSGA. Residues 18 to 100 constitute a propeptide, activation peptide; sequence DPLKENDMLF…DVYHFKTMPG (83 aa). N-linked (GlcNAc...) asparagine glycosylation is present at asparagine 69. The Cysteine switch motif lies at 85–92; the sequence is PRCGVPDV. Zn(2+) is bound at residue cysteine 87. 2 residues coordinate Ca(2+): aspartate 119 and aspartate 153. Histidine 163 and aspartate 165 together coordinate Zn(2+). Residues aspartate 170, glycine 171, glycine 173, and valine 175 each contribute to the Ca(2+) site. Histidine 178 provides a ligand contact to Zn(2+). The Ca(2+) site is built by glycine 185, glycine 187, and aspartate 189. Position 191 (histidine 191) interacts with Zn(2+). Ca(2+)-binding residues include aspartate 193, glutamate 194, and glutamate 196. Histidine 213 provides a ligand contact to Zn(2+). Glutamate 214 is a catalytic residue. Zn(2+) is bound by residues histidine 217 and histidine 223. Hemopexin repeat units lie at residues 274-323, 324-370, 372-420, and 421-464; these read PTAC…WPTL, PSGI…GFPD, VKKI…FPGI, and GPKI…WFDC. A disulfide bridge connects residues cysteine 277 and cysteine 464. 4 residues coordinate Ca(2+): aspartate 284, glutamate 328, aspartate 376, and aspartate 425.

The protein belongs to the peptidase M10A family. The cofactor is Ca(2+). Zn(2+) is required as a cofactor.

Its subcellular location is the secreted. The protein resides in the extracellular space. It localises to the extracellular matrix. The catalysed reaction is Hydrolysis of soluble and insoluble elastin. Specific cleavages are also produced at 14-Ala-|-Leu-15 and 16-Tyr-|-Leu-17 in the B chain of insulin.. Its function is as follows. May be involved in tissue injury and remodeling. Has significant elastolytic activity. Can accept large and small amino acids at the P1' site, but has a preference for leucine. Aromatic or hydrophobic residues are preferred at the P1 site, with small hydrophobic residues (preferably alanine) occupying P3. This is Macrophage metalloelastase (MMP12) from Oryctolagus cuniculus (Rabbit).